A 403-amino-acid polypeptide reads, in one-letter code: Dynactin subunit 2 (403 aa).

The disordered stretch occupies residues 1–26 (MADPKYADLPGIARNEPDVYETSDLP). Ala2 is modified (N-acetylalanine). At Tyr6 the chain carries Phosphotyrosine. Position 83 is a phosphoserine (Ser83). A Phosphotyrosine modification is found at Tyr86. The stretch at 100–130 (QQKYQRLLHEVQELTTEVEKIKTTVKESATE) forms a coiled coil. Phosphothreonine is present on residues Thr134 and Thr200. The tract at residues 184 to 204 (TKNSKGTGSGGKTTSGTPPDS) is disordered. Positions 216-248 (EQDKFSQAAKVAELEKRLTELEATVRCDQDAQN) form a coiled coil. A Phosphoserine modification is found at Ser322.

The protein belongs to the dynactin subunit 2 family. In terms of assembly, subunit of dynactin, a multiprotein complex part of a tripartite complex with dynein and a adapter, such as BICDL1, BICD2 or HOOK3. The dynactin complex is built around ACTR1A/ACTB filament and consists of an actin-related filament composed of a shoulder domain, a pointed end and a barbed end. Its length is defined by its flexible shoulder domain. The soulder is composed of 2 DCTN1 subunits, 4 DCTN2 and 2 DCTN3. The 4 DCNT2 (via N-terminus) bind the ACTR1A filament and act as molecular rulers to determine the length. The pointed end is important for binding dynein-dynactin cargo adapters and consists of 4 subunits: ACTR10, DCNT4, DCTN5 and DCTN6. The barbed end is composed of a CAPZA1:CAPZB heterodimers, which binds ACTR1A/ACTB filament and dynactin and stabilizes dynactin. Interacts with BICD2 and CEP135. Interacts with DYNAP. Interacts with ECPAS. Interacts with MAPRE1.

It is found in the cytoplasm. The protein resides in the cytoskeleton. It localises to the microtubule organizing center. The protein localises to the centrosome. Its subcellular location is the membrane. Part of the dynactin complex that activates the molecular motor dynein for ultra-processive transport along microtubules. In the dynactin soulder domain, binds the ACTR1A filament and acts as a molecular ruler to determine the length. Modulates cytoplasmic dynein binding to an organelle, and plays a role in prometaphase chromosome alignment and spindle organization during mitosis. Involved in anchoring microtubules to centrosomes. May play a role in synapse formation during brain development. This chain is Dynactin subunit 2 (DCTN2), found in Bos taurus (Bovine).